The chain runs to 344 residues: N-acetyl-gamma-glutamyl-phosphate reductase (344 aa).

Cys-149 is a catalytic residue.

It belongs to the NAGSA dehydrogenase family. Type 1 subfamily.

It is found in the cytoplasm. The enzyme catalyses N-acetyl-L-glutamate 5-semialdehyde + phosphate + NADP(+) = N-acetyl-L-glutamyl 5-phosphate + NADPH + H(+). Its pathway is amino-acid biosynthesis; L-arginine biosynthesis; N(2)-acetyl-L-ornithine from L-glutamate: step 3/4. Its function is as follows. Catalyzes the NADPH-dependent reduction of N-acetyl-5-glutamyl phosphate to yield N-acetyl-L-glutamate 5-semialdehyde. In Syntrophobacter fumaroxidans (strain DSM 10017 / MPOB), this protein is N-acetyl-gamma-glutamyl-phosphate reductase.